Here is a 987-residue protein sequence, read N- to C-terminus: Ephrin type-B receptor 4 (987 aa).

The N-terminal stretch at 1 to 15 is a signal peptide; that stretch reads MELRVLLCWASLAAA. Residues 16–539 are Extracellular-facing; it reads LEETLLNTKL…ESEGWREQLA (524 aa). The region spanning 17-202 is the Eph LBD domain; sequence EETLLNTKLE…FYKKCAQLTV (186 aa). Cystine bridges form between cysteine 61-cysteine 184 and cysteine 97-cysteine 107. N-linked (GlcNAc...) asparagine glycosylation is found at asparagine 203, asparagine 335, and asparagine 426. Fibronectin type-III domains follow at residues 323–432 and 436–529; these read PPSA…TDRE and AVSD…TQLD. Residues 540-560 form a helical membrane-spanning segment; the sequence is LIAGTAVVGVVLVLVVIVVAV. At 561 to 987 the chain is on the cytoplasmic side; the sequence is LCLRKQSNGR…GGTGGPAPQY (427 aa). The Protein kinase domain maps to 615–899; sequence VKIEEVIGAG…ENGGASHPLL (285 aa). ATP-binding positions include 621–629 and lysine 647; that span reads IGAGEFGEV. The active-site Proton acceptor is the aspartate 740. Residues serine 769, serine 770, serine 911, and serine 943 each carry the phosphoserine modification. Positions 907-971 constitute an SAM domain; the sequence is SAFGSVGEWL…LASVQHMKSQ (65 aa). The segment at 965–987 is disordered; it reads VQHMKSQAKPGTPGGTGGPAPQY. The residue at position 976 (threonine 976) is a Phosphothreonine. Residues 976 to 987 show a composition bias toward gly residues; it reads TPGGTGGPAPQY. Positions 985-987 match the PDZ-binding motif; the sequence is PQY. Tyrosine 987 is modified (phosphotyrosine).

This sequence belongs to the protein kinase superfamily. Tyr protein kinase family. Ephrin receptor subfamily. Heterotetramer upon binding of the ligand. The heterotetramer is composed of an ephrin dimer and a receptor dimer. Oligomerization is probably required to induce biological responses. Interacts with RASA1; the interaction depends on EPHB4 tyrosine-phosphorylation. Phosphorylated; autophosphorylation is stimulated by EFNB2. In terms of tissue distribution, abundantly expressed in placenta but also detected in kidney, liver, lung, pancreas, skeletal muscle and heart. Expressed in primitive and myeloid, but not lymphoid, hematopoietic cells. Also observed in cell lines derived from liver, breast, colon, lung, melanocyte and cervix.

Its subcellular location is the cell membrane. The catalysed reaction is L-tyrosyl-[protein] + ATP = O-phospho-L-tyrosyl-[protein] + ADP + H(+). Receptor tyrosine kinase which binds promiscuously transmembrane ephrin-B family ligands residing on adjacent cells, leading to contact-dependent bidirectional signaling into neighboring cells. The signaling pathway downstream of the receptor is referred to as forward signaling while the signaling pathway downstream of the ephrin ligand is referred to as reverse signaling. Together with its cognate ligand/functional ligand EFNB2 it is involved in the regulation of cell adhesion and migration, and plays a central role in heart morphogenesis, angiogenesis and blood vessel remodeling and permeability. EPHB4-mediated forward signaling controls cellular repulsion and segregation from EFNB2-expressing cells. The chain is Ephrin type-B receptor 4 (EPHB4) from Homo sapiens (Human).